We begin with the raw amino-acid sequence, 295 residues long: Small ribosomal subunit protein uS2 (295 aa).

Residue Ser2 is modified to N-acetylserine. Ser43 is modified (phosphoserine). Position 52 is an N6-acetyllysine (Lys52). Positions 54–113 (TWEKLLLAARAIVAIENPADVSVISSRNTGQRAVLKFAAATGATPIAGRFTPGTFTNQIQ) are interaction with PPP1R16B. Lys89 bears the N6-acetyllysine; alternate mark. A Glycyl lysine isopeptide (Lys-Gly) (interchain with G-Cter in SUMO2); alternate cross-link involves residue Lys89. At Thr97 the chain carries Phosphothreonine. Laminin-binding regions lie at residues 161 to 180 (IPCN…MLAR) and 205 to 229 (RDPE…EFQG). Positions 214–227 (EQAAAEKAVTKEEF) are enriched in basic and acidic residues. Residues 214–240 (EQAAAEKAVTKEEFQGEWTAPAPEFTA) are disordered. 4 [DE]-W-[ST] repeats span residues 230-232 (EWT), 247-249 (DWS), 266-268 (DWS), and 275-277 (DWS). Positions 242–295 (QPEVADWSEGVQVPSVPIQQFPTEDWSARPFTEDWSAAPTAQATEWVGTTSELS) are laminin-binding. Residues 263–295 (PTEDWSARPFTEDWSAAPTAQATEWVGTTSELS) are disordered. Polar residues predominate over residues 280–295 (PTAQATEWVGTTSELS).

The protein belongs to the universal ribosomal protein uS2 family. Monomer (37LRP) and homodimer (67LR). Component of the small ribosomal subunit. Mature ribosomes consist of a small (40S) and a large (60S) subunit. The 40S subunit contains about 33 different proteins and 1 molecule of RNA (18S). The 60S subunit contains about 49 different proteins and 3 molecules of RNA (28S, 5.8S and 5S). Interacts with RPS21. Interacts with several laminins including at least LAMB1. Interacts with MDK. The mature dimeric form interacts with PPP1R16B (via its fourth ankyrin repeat). Interacts with PPP1CA only in the presence of PPP1R16B. In terms of processing, acylated. Acylation may be a prerequisite for conversion of the monomeric 37 kDa laminin receptor precursor (37LRP) to the mature dimeric 67 kDa laminin receptor (67LR), and may provide a mechanism for membrane association. Post-translationally, cleaved by stromelysin-3 (ST3) at the cell surface. Cleavage by stromelysin-3 may be a mechanism to alter cell-extracellular matrix interactions.

It localises to the cell membrane. The protein localises to the cytoplasm. Its subcellular location is the nucleus. Functionally, required for the assembly and/or stability of the 40S ribosomal subunit. Required for the processing of the 20S rRNA-precursor to mature 18S rRNA in a late step of the maturation of 40S ribosomal subunits. Also functions as a cell surface receptor for laminin. Plays a role in cell adhesion to the basement membrane and in the consequent activation of signaling transduction pathways. May play a role in cell fate determination and tissue morphogenesis. Also acts as a receptor for several other ligands, including the pathogenic prion protein, viruses, and bacteria. Acts as a PPP1R16B-dependent substrate of PPP1CA. The protein is Small ribosomal subunit protein uS2 of Ovis aries (Sheep).